A 530-amino-acid chain; its full sequence is Phosphoenolpyruvate carboxykinase (ATP) (530 aa).

Substrate contacts are provided by R58, Y195, and K201. Residues K201, H220, and 236–244 each bind ATP; that span reads GLSGTGKTT. 2 residues coordinate Mn(2+): K201 and H220. D257 provides a ligand contact to Mn(2+). ATP contacts are provided by residues E285, R321, 440–441, and T446; that span reads RI. R321 is a substrate binding site.

The protein belongs to the phosphoenolpyruvate carboxykinase (ATP) family. It depends on Mn(2+) as a cofactor.

It localises to the cytoplasm. The enzyme catalyses oxaloacetate + ATP = phosphoenolpyruvate + ADP + CO2. Its pathway is carbohydrate biosynthesis; gluconeogenesis. In terms of biological role, involved in the gluconeogenesis. Catalyzes the conversion of oxaloacetate (OAA) to phosphoenolpyruvate (PEP) through direct phosphoryl transfer between the nucleoside triphosphate and OAA. This is Phosphoenolpyruvate carboxykinase (ATP) from Staphylococcus aureus (strain bovine RF122 / ET3-1).